We begin with the raw amino-acid sequence, 718 residues long: Polyribonucleotide nucleotidyltransferase (718 aa).

Mg(2+)-binding residues include Asp497 and Asp503. The KH domain maps to 564-623; that stretch reads PRLLTMRIDPDMIGLVIGPGGKTVKSITEQTKTKIDIDDDGTVTISASEAEQAERAKQLI. Positions 633-701 constitute an S1 motif domain; the sequence is GEVYVGRVTR…NKGRLNLTRL (69 aa).

This sequence belongs to the polyribonucleotide nucleotidyltransferase family. Requires Mg(2+) as cofactor.

Its subcellular location is the cytoplasm. It catalyses the reaction RNA(n+1) + phosphate = RNA(n) + a ribonucleoside 5'-diphosphate. Functionally, involved in mRNA degradation. Catalyzes the phosphorolysis of single-stranded polyribonucleotides processively in the 3'- to 5'-direction. The chain is Polyribonucleotide nucleotidyltransferase from Gloeothece citriformis (strain PCC 7424) (Cyanothece sp. (strain PCC 7424)).